A 137-amino-acid polypeptide reads, in one-letter code: MGDWKVYISAVLRDQRIDDVAIVGHADNSCVWASRPGGLLAAISPQEVGVLTGPDRHTFLQAGLSVGGRRCCVIRDHLLAEGDGVLDARTKGLDARAVCVGRAPRALLVLMGRRGVHGGILNKTVHELIRGLRMQGA.

It belongs to the profilin family. In terms of assembly, interacts with ACTRT3. As to expression, testis specific.

The protein localises to the cytoplasm. Its subcellular location is the cytoskeleton. It localises to the nucleus. In terms of biological role, binds to actin and affects the structure of the cytoskeleton. Slightly reduces actin polymerization. Binds to poly-L-proline, phosphatidylinositol 3-phosphate (PtdIns(3)P), phosphatidylinositol 4,5-bisphosphate (PtdIns(4,5)P2) and phosphatidylinositol 4-phosphate (PtdIns(4)P). May be involved in spermatogenesis. The protein is Profilin-3 (PFN3) of Homo sapiens (Human).